The following is an 83-amino-acid chain: Mu-theraphotoxin-Hhn2b 3 (83 aa).

An N-terminal signal peptide occupies residues M1–A21. Residues S22–R48 constitute a propeptide that is removed on maturation. Intrachain disulfides connect C50-C65, C57-C70, and C64-C77. L81 is subject to Leucine amide.

The protein belongs to the neurotoxin 10 (Hwtx-1) family. 14 (Hntx-1) subfamily. Monomer. As to expression, expressed by the venom gland.

Its subcellular location is the secreted. Its function is as follows. Weakly blocks the rat SCN2A/SCN1B (Nav1.2/beta-1) sodium channel (IC(50)=68 uM) and the insect sodium channel para/tipE (IC(50)=4.3 uM), without altering the activation or inactivation kinetics (depressant toxin). This is Mu-theraphotoxin-Hhn2b 3 from Cyriopagopus hainanus (Chinese bird spider).